The chain runs to 283 residues: Putative 4-diphosphocytidyl-2-C-methyl-D-erythritol kinase (283 aa).

K10 is an active-site residue. 94–104 (PVCAGLGGGST) provides a ligand contact to ATP. D136 is an active-site residue.

This sequence belongs to the GHMP kinase family. IspE subfamily.

The enzyme catalyses 4-CDP-2-C-methyl-D-erythritol + ATP = 4-CDP-2-C-methyl-D-erythritol 2-phosphate + ADP + H(+). Functionally, catalyzes the phosphorylation of the position 2 hydroxy group of 4-diphosphocytidyl-2C-methyl-D-erythritol. The polypeptide is Putative 4-diphosphocytidyl-2-C-methyl-D-erythritol kinase (ispE) (Streptococcus agalactiae serotype Ia (strain ATCC 27591 / A909 / CDC SS700)).